The sequence spans 284 residues: Acetylglutamate kinase (284 aa).

Residues 64–65 (GG), R86, and N181 contribute to the substrate site.

It belongs to the acetylglutamate kinase family. ArgB subfamily.

Its subcellular location is the cytoplasm. The enzyme catalyses N-acetyl-L-glutamate + ATP = N-acetyl-L-glutamyl 5-phosphate + ADP. Its pathway is amino-acid biosynthesis; L-arginine biosynthesis; N(2)-acetyl-L-ornithine from L-glutamate: step 2/4. Its function is as follows. Catalyzes the ATP-dependent phosphorylation of N-acetyl-L-glutamate. This chain is Acetylglutamate kinase, found in Nitratiruptor sp. (strain SB155-2).